The primary structure comprises 73 residues: Neutrophil elastase 2B (73 aa).

Residues 1–73 enclose the Peptidase S1 domain; the sequence is IVGGRPARPH…SGGPLVCNGL (73 aa). S64 functions as the Charge relay system in the catalytic mechanism.

Belongs to the peptidase S1 family. Elastase subfamily.

May be involved in the degradation of connective tissue in chronic lung disease. This is Neutrophil elastase 2B from Equus caballus (Horse).